Consider the following 1072-residue polypeptide: Zn(2)-C6 fungal-type transcription factor FTF2 (1072 aa).

Positions Cys-179–Cys-206 form a DNA-binding region, zn(2)-C6 fungal-type.

It localises to the nucleus. Zn(2)-C6 fungal-type transcription factor that has a role in conidia production and also in plant colonization. Acts as a negative regulator of the production of macroconidia and is required for full virulence and the positive regulation of SIX effectors. In addition, FTF2 is also involved in the regulation of class II hydrophobins FOXG_02746 and FOXG_02748 likely required for plant colonization. This chain is Zn(2)-C6 fungal-type transcription factor FTF2, found in Fusarium oxysporum f. sp. lycopersici (strain 4287 / CBS 123668 / FGSC 9935 / NRRL 34936) (Fusarium vascular wilt of tomato).